The sequence spans 668 residues: UvrABC system protein B (668 aa).

The Helicase ATP-binding domain occupies 25-170 (NSILLGNKYQ…FVGQKISIKE (146 aa)). ATP is bound at residue 38–45 (GVTGSGKT). The Beta-hairpin signature appears at 91 to 114 (YYDYYQPESYVPSKDLFIEKEATI). The 167-residue stretch at 429-595 (QMEDLYSEIQ…TIVKKIQNIL (167 aa)) folds into the Helicase C-terminal domain. Residues 622–657 (KKLIDKLKFDLEEAVNDERFEDAIVLRDKIKELSSK) enclose the UVR domain.

Belongs to the UvrB family. In terms of assembly, forms a heterotetramer with UvrA during the search for lesions. Interacts with UvrC in an incision complex.

It localises to the cytoplasm. Functionally, the UvrABC repair system catalyzes the recognition and processing of DNA lesions. A damage recognition complex composed of 2 UvrA and 2 UvrB subunits scans DNA for abnormalities. Upon binding of the UvrA(2)B(2) complex to a putative damaged site, the DNA wraps around one UvrB monomer. DNA wrap is dependent on ATP binding by UvrB and probably causes local melting of the DNA helix, facilitating insertion of UvrB beta-hairpin between the DNA strands. Then UvrB probes one DNA strand for the presence of a lesion. If a lesion is found the UvrA subunits dissociate and the UvrB-DNA preincision complex is formed. This complex is subsequently bound by UvrC and the second UvrB is released. If no lesion is found, the DNA wraps around the other UvrB subunit that will check the other stand for damage. The sequence is that of UvrABC system protein B from Borreliella burgdorferi (strain ZS7) (Borrelia burgdorferi).